A 297-amino-acid chain; its full sequence is Acetaldehyde dehydrogenase (297 aa).

Residue Cys-128 is the Acyl-thioester intermediate of the active site. NAD(+) is bound by residues 159–167 (SAGPGTRQN) and Asn-272.

It belongs to the acetaldehyde dehydrogenase family.

The enzyme catalyses acetaldehyde + NAD(+) + CoA = acetyl-CoA + NADH + H(+). The chain is Acetaldehyde dehydrogenase from Desulfitobacterium hafniense (strain DSM 10664 / DCB-2).